Reading from the N-terminus, the 141-residue chain is 6,7-dimethyl-8-ribityllumazine synthase (141 aa).

5-amino-6-(D-ribitylamino)uracil contacts are provided by residues Phe13, 45–47 (SFE), and 69–71 (AII). 74-75 (DT) lines the (2S)-2-hydroxy-3-oxobutyl phosphate pocket. His77 (proton donor) is an active-site residue. Leu102 is a binding site for 5-amino-6-(D-ribitylamino)uracil. Arg117 contributes to the (2S)-2-hydroxy-3-oxobutyl phosphate binding site.

Belongs to the DMRL synthase family.

The enzyme catalyses (2S)-2-hydroxy-3-oxobutyl phosphate + 5-amino-6-(D-ribitylamino)uracil = 6,7-dimethyl-8-(1-D-ribityl)lumazine + phosphate + 2 H2O + H(+). It functions in the pathway cofactor biosynthesis; riboflavin biosynthesis; riboflavin from 2-hydroxy-3-oxobutyl phosphate and 5-amino-6-(D-ribitylamino)uracil: step 1/2. In terms of biological role, catalyzes the formation of 6,7-dimethyl-8-ribityllumazine by condensation of 5-amino-6-(D-ribitylamino)uracil with 3,4-dihydroxy-2-butanone 4-phosphate. This is the penultimate step in the biosynthesis of riboflavin. This chain is 6,7-dimethyl-8-ribityllumazine synthase, found in Methanopyrus kandleri (strain AV19 / DSM 6324 / JCM 9639 / NBRC 100938).